We begin with the raw amino-acid sequence, 271 residues long: Putative phosphoenolpyruvate synthase regulatory protein (271 aa).

Gly152–Thr159 is an ADP binding site.

Belongs to the pyruvate, phosphate/water dikinase regulatory protein family. PSRP subfamily.

The enzyme catalyses [pyruvate, water dikinase] + ADP = [pyruvate, water dikinase]-phosphate + AMP + H(+). The catalysed reaction is [pyruvate, water dikinase]-phosphate + phosphate + H(+) = [pyruvate, water dikinase] + diphosphate. In terms of biological role, bifunctional serine/threonine kinase and phosphorylase involved in the regulation of the phosphoenolpyruvate synthase (PEPS) by catalyzing its phosphorylation/dephosphorylation. The polypeptide is Putative phosphoenolpyruvate synthase regulatory protein (Marinobacter nauticus (strain ATCC 700491 / DSM 11845 / VT8) (Marinobacter aquaeolei)).